The primary structure comprises 523 residues: MSQQVIIFDTTLRDGEQALQASLSVKEKLQIALALERMGVDVMEVGFPVSSPGDFESVQTIARQVKNSRVCALARCVEKDIDVAAESLKVAEAFRIHTFIATSPMHIATKLRSTLDEVIERAIYMVKRARNYTDDVEFSCEDAGRTPIADLARVVEAAINAGATTINIPDTVGYTMPFEFAGIISGLYERVPNIDKAIISVHTHDDLGLAVGNSLAAVHAGARQVEGAMNGIGERAGNCSLEEVIMAIKVRKDILNVHTAINHQEIWRTSQLVSQICNMPIPANKAIVGSGAFAHSSGIHQDGVLKNRENYEIMTPESIGLNQIQLNLTSRSGRAAVKHRMDEMGYKESEYNLDNLYDAFLKLADKKGQVFDYDLEALAFIGKQQEEPEHFRLDYFSVQSSSNDIATAAVKLACGEEVKAEAANGNGPVDAVYQAINRITDYNVELVKYSLTAKGHGKDALGQVDIVANYNGRRFHGVGLATDIVESSAKAMVHVLNNIWRAAEVEKELQRKAQHNENNKETV.

The Pyruvate carboxyltransferase domain occupies 5-267 (VIIFDTTLRD…HTAINHQEIW (263 aa)). Mn(2+) is bound by residues Asp14, His202, His204, and Asn238. Positions 392–523 (RLDYFSVQSS…QHNENNKETV (132 aa)) are regulatory domain.

Belongs to the alpha-IPM synthase/homocitrate synthase family. LeuA type 1 subfamily. As to quaternary structure, homodimer. Requires Mn(2+) as cofactor.

Its subcellular location is the cytoplasm. It catalyses the reaction 3-methyl-2-oxobutanoate + acetyl-CoA + H2O = (2S)-2-isopropylmalate + CoA + H(+). The protein operates within amino-acid biosynthesis; L-leucine biosynthesis; L-leucine from 3-methyl-2-oxobutanoate: step 1/4. Catalyzes the condensation of the acetyl group of acetyl-CoA with 3-methyl-2-oxobutanoate (2-ketoisovalerate) to form 3-carboxy-3-hydroxy-4-methylpentanoate (2-isopropylmalate). The polypeptide is 2-isopropylmalate synthase (Shigella dysenteriae serotype 1 (strain Sd197)).